The sequence spans 156 residues: Large ribosomal subunit protein uL22 (156 aa).

The protein belongs to the universal ribosomal protein uL22 family. As to quaternary structure, part of the 50S ribosomal subunit.

In terms of biological role, this protein binds specifically to 23S rRNA. It makes multiple contacts with different domains of the 23S rRNA in the assembled 50S subunit and ribosome. The globular domain of the protein is located near the polypeptide exit tunnel on the outside of the subunit, while an extended beta-hairpin is found that lines the wall of the exit tunnel in the center of the 70S ribosome. The sequence is that of Large ribosomal subunit protein uL22 from Sulfolobus acidocaldarius (strain ATCC 33909 / DSM 639 / JCM 8929 / NBRC 15157 / NCIMB 11770).